The primary structure comprises 1034 residues: Ice nucleation protein InaU (1034 aa).

The octapeptide periodicity stretch occupies residues 162 to 993 (ATYGSTLSGT…LTAGENSVLI (832 aa)). Disordered stretches follow at residues 260-287 (YGST…KGSD), 311-342 (TQTA…GYGS), 356-383 (YGST…KGSD), 407-438 (TQTA…GYGS), 452-480 (YGST…GSDL), and 570-597 (AREG…TGYG). Polar residues-rich tracts occupy residues 261 to 286 (GSTQ…QKGS), 311 to 334 (TQTA…QKGS), 357 to 382 (GSTQ…QKGS), 407 to 430 (TQTA…QKGS), 453 to 480 (GSTQ…GSDL), and 580 to 592 (YGST…NSDL).

It belongs to the bacterial ice nucleation protein family.

Its subcellular location is the cell outer membrane. Its function is as follows. Ice nucleation proteins enable bacteria to nucleate crystallization in supercooled water. This Pantoea ananas (Erwinia uredovora) protein is Ice nucleation protein InaU (inaU).